We begin with the raw amino-acid sequence, 267 residues long: Ribosomal RNA small subunit methyltransferase A (267 aa).

Residues Asn-16, Leu-18, Gly-43, Glu-64, Asp-89, and Asn-110 each coordinate S-adenosyl-L-methionine.

It belongs to the class I-like SAM-binding methyltransferase superfamily. rRNA adenine N(6)-methyltransferase family. RsmA subfamily.

Its subcellular location is the cytoplasm. The catalysed reaction is adenosine(1518)/adenosine(1519) in 16S rRNA + 4 S-adenosyl-L-methionine = N(6)-dimethyladenosine(1518)/N(6)-dimethyladenosine(1519) in 16S rRNA + 4 S-adenosyl-L-homocysteine + 4 H(+). In terms of biological role, specifically dimethylates two adjacent adenosines (A1518 and A1519) in the loop of a conserved hairpin near the 3'-end of 16S rRNA in the 30S particle. May play a critical role in biogenesis of 30S subunits. This chain is Ribosomal RNA small subunit methyltransferase A, found in Pseudomonas putida (strain ATCC 47054 / DSM 6125 / CFBP 8728 / NCIMB 11950 / KT2440).